A 314-amino-acid chain; its full sequence is Nerylneryl diphosphate synthase CPT2, chloroplastic (314 aa).

The transit peptide at 1-61 (MNSSIVSQHF…MSDRGLSKIS (61 aa)) directs the protein to the chloroplast. D97 is an active-site residue.

It belongs to the UPP synthase family. Requires Mg(2+) as cofactor. Expressed in stems. Expressed in petiolules. Expressed at low levels in leaf trichomes, old leaf and roots.

It localises to the plastid. The protein localises to the chloroplast. It catalyses the reaction 3 isopentenyl diphosphate + dimethylallyl diphosphate = nerylneryl diphosphate + 3 diphosphate. It carries out the reaction isopentenyl diphosphate + dimethylallyl diphosphate = neryl diphosphate + diphosphate. The enzyme catalyses neryl diphosphate + isopentenyl diphosphate = (2Z,6Z)-farnesyl diphosphate + diphosphate. The catalysed reaction is (2Z,6Z)-farnesyl diphosphate + isopentenyl diphosphate = nerylneryl diphosphate + diphosphate. In terms of biological role, uses dimethylallyl diphosphate and isopentenyl diphosphate to catalyze the cis-prenyl chain elongation and produce the 20 carbon product nerylneryl diphosphate. The sequence is that of Nerylneryl diphosphate synthase CPT2, chloroplastic from Solanum lycopersicum (Tomato).